The chain runs to 391 residues: Phosphoglycerate kinase (391 aa).

Substrate contacts are provided by residues Asp-21 to Asn-23, Arg-36, His-59 to Arg-62, Arg-113, and Arg-146. Residues Lys-197, Glu-319, and Gly-345–Thr-348 each bind ATP.

This sequence belongs to the phosphoglycerate kinase family. In terms of assembly, monomer.

The protein localises to the cytoplasm. It catalyses the reaction (2R)-3-phosphoglycerate + ATP = (2R)-3-phospho-glyceroyl phosphate + ADP. Its pathway is carbohydrate degradation; glycolysis; pyruvate from D-glyceraldehyde 3-phosphate: step 2/5. The polypeptide is Phosphoglycerate kinase (Xanthomonas axonopodis pv. citri (strain 306)).